Consider the following 502-residue polypeptide: UPF0371 protein CLK_3516 (502 aa).

This sequence belongs to the UPF0371 family.

The polypeptide is UPF0371 protein CLK_3516 (Clostridium botulinum (strain Loch Maree / Type A3)).